The chain runs to 396 residues: Phosphoglycerate kinase (396 aa).

Residues 21–23 (DFN), Arg36, 59–62 (HLGR), Arg118, and Arg151 contribute to the substrate site. Residues Lys201, Gly292, Glu323, and 349–352 (GGDS) contribute to the ATP site.

It belongs to the phosphoglycerate kinase family. In terms of assembly, monomer.

It localises to the cytoplasm. The catalysed reaction is (2R)-3-phosphoglycerate + ATP = (2R)-3-phospho-glyceroyl phosphate + ADP. The protein operates within carbohydrate degradation; glycolysis; pyruvate from D-glyceraldehyde 3-phosphate: step 2/5. The sequence is that of Phosphoglycerate kinase from Leptospira biflexa serovar Patoc (strain Patoc 1 / Ames).